A 237-amino-acid chain; its full sequence is Nodulation protein NolA (237 aa).

The region spanning 10–79 is the HTH merR-type domain; that stretch reads RWRIGELAGA…LQEIRRAMDG (70 aa). The segment at residues 13 to 32 is a DNA-binding region (H-T-H motif); it reads IGELAGATGVTVRTLHHYEH.

Functionally, involved in genotype-specific nodulation of soybeans. This chain is Nodulation protein NolA (nolA), found in Bradyrhizobium sp. (strain NC92).